The sequence spans 206 residues: Protein-methionine-sulfoxide reductase heme-binding subunit MsrQ (206 aa).

6 helical membrane passes run 10–30 (VFIAAAVWPLFWLYEAWSAVL), 42–62 (LGLGTLILLLITLAMTPLQKL), 75–95 (LGLWCFAYVVLHLAAYCVFVL), 110–130 (PYIIVGALGFLLLLVLAVTSN), 147–167 (LVYVVLGLGLLHMLWIVRADL), and 169–189 (EWAIYASIGALLLVLRIPPVM).

This sequence belongs to the MsrQ family. As to quaternary structure, heterodimer of a catalytic subunit (MsrP) and a heme-binding subunit (MsrQ). The cofactor is FMN. Requires heme b as cofactor.

The protein localises to the cell inner membrane. Its function is as follows. Part of the MsrPQ system that repairs oxidized periplasmic proteins containing methionine sulfoxide residues (Met-O), using respiratory chain electrons. Thus protects these proteins from oxidative-stress damage caused by reactive species of oxygen and chlorine generated by the host defense mechanisms. MsrPQ is essential for the maintenance of envelope integrity under bleach stress, rescuing a wide series of structurally unrelated periplasmic proteins from methionine oxidation. MsrQ provides electrons for reduction to the reductase catalytic subunit MsrP, using the quinone pool of the respiratory chain. In Pseudomonas fluorescens (strain SBW25), this protein is Protein-methionine-sulfoxide reductase heme-binding subunit MsrQ.